Consider the following 89-residue polypeptide: Small ribosomal subunit protein uS14 (89 aa).

The protein belongs to the universal ribosomal protein uS14 family. As to quaternary structure, part of the 30S ribosomal subunit. Contacts proteins S3 and S10.

Functionally, binds 16S rRNA, required for the assembly of 30S particles and may also be responsible for determining the conformation of the 16S rRNA at the A site. This chain is Small ribosomal subunit protein uS14, found in Oenococcus oeni (strain ATCC BAA-331 / PSU-1).